Here is a 701-residue protein sequence, read N- to C-terminus: Elongation factor G (701 aa).

Residues 8-290 (ERYRNIGISA…AVVDYLPAPT (283 aa)) enclose the tr-type G domain. GTP contacts are provided by residues 17–24 (AHIDAGKT), 88–92 (DTPGH), and 142–145 (NKMD).

This sequence belongs to the TRAFAC class translation factor GTPase superfamily. Classic translation factor GTPase family. EF-G/EF-2 subfamily.

It is found in the cytoplasm. Catalyzes the GTP-dependent ribosomal translocation step during translation elongation. During this step, the ribosome changes from the pre-translocational (PRE) to the post-translocational (POST) state as the newly formed A-site-bound peptidyl-tRNA and P-site-bound deacylated tRNA move to the P and E sites, respectively. Catalyzes the coordinated movement of the two tRNA molecules, the mRNA and conformational changes in the ribosome. In Aeromonas hydrophila subsp. hydrophila (strain ATCC 7966 / DSM 30187 / BCRC 13018 / CCUG 14551 / JCM 1027 / KCTC 2358 / NCIMB 9240 / NCTC 8049), this protein is Elongation factor G.